The sequence spans 298 residues: Aquaporin NIP2-1 (298 aa).

3 N-linked (GlcNAc...) asparagine glycosylation sites follow: Asn4, Asn13, and Asn26. A run of 2 helical transmembrane segments spans residues Val51–Ile71 and Ser85–Ala105. Residues Asn108 to Ala110 carry the NPA 1 motif. 3 helical membrane-spanning segments follow: residues Ile124–Leu144, Ser166–Thr186, and Leu194–Ser214. The short motif at Asn219–Ala221 is the NPA 2 element. The chain crosses the membrane as a helical span at residues Trp237–Ile257.

It belongs to the MIP/aquaporin (TC 1.A.8) family. NIP (TC 1.A.8.12) subfamily. In terms of tissue distribution, mainly expressed in the roots. In roots, it localizes in the main and lateral roots, but not in root hairs. Within a root, it localizes on the plasma membrane of the distal side of both exodermis and endodermis, where casparian strips exist (at protein level). Expressed low levels in leaves and anthers.

The protein localises to the cell membrane. Its function is as follows. Silicon influx transporter responsible for silicon transport from the external solution to the root cells. Is coupled with the silicon efflux transporter LSI2 in both exodermal and endodermal root cells for an efficient silicon transport across the cells into the stele. Silicon is beneficial to plant growth and helps plants to overcome abiotic and biotic stresses by preventing lodging (falling over) and increasing resistance to pests and diseases, as well as other stresses. Is coupled with LSI2 transporter in roots for efficient uptake of arsenite, which is further dispatched in shoots and grains. Mediates uptake of methylated arsenic species in roots. In Oryza sativa subsp. japonica (Rice), this protein is Aquaporin NIP2-1.